A 737-amino-acid polypeptide reads, in one-letter code: Elongation factor 2 (737 aa).

Positions 18–262 constitute a tr-type G domain; sequence TRVRNIGIIA…AVIKFVPNPR (245 aa). GTP is bound by residues 27-34, 93-97, and 147-150; these read AHVDHGKT, DTPGH, and NKVD. His-604 bears the Diphthamide mark.

The protein belongs to the TRAFAC class translation factor GTPase superfamily. Classic translation factor GTPase family. EF-G/EF-2 subfamily.

It localises to the cytoplasm. In terms of biological role, catalyzes the GTP-dependent ribosomal translocation step during translation elongation. During this step, the ribosome changes from the pre-translocational (PRE) to the post-translocational (POST) state as the newly formed A-site-bound peptidyl-tRNA and P-site-bound deacylated tRNA move to the P and E sites, respectively. Catalyzes the coordinated movement of the two tRNA molecules, the mRNA and conformational changes in the ribosome. This chain is Elongation factor 2 (fusA), found in Sulfolobus acidocaldarius (strain ATCC 33909 / DSM 639 / JCM 8929 / NBRC 15157 / NCIMB 11770).